A 208-amino-acid chain; its full sequence is Large ribosomal subunit protein uL4 (208 aa).

The segment at 44–89 is disordered; it reads RRQGTHKAKNRSEVRGGGRKPYRQKGTGHARQGSTRSPLMTGGGTI. The span at 60–71 shows a compositional bias: basic residues; the sequence is GGRKPYRQKGTG.

This sequence belongs to the universal ribosomal protein uL4 family. As to quaternary structure, part of the 50S ribosomal subunit.

In terms of biological role, one of the primary rRNA binding proteins, this protein initially binds near the 5'-end of the 23S rRNA. It is important during the early stages of 50S assembly. It makes multiple contacts with different domains of the 23S rRNA in the assembled 50S subunit and ribosome. Functionally, forms part of the polypeptide exit tunnel. The chain is Large ribosomal subunit protein uL4 from Chlorobium phaeobacteroides (strain BS1).